Consider the following 445-residue polypeptide: E3 ubiquitin-protein ligase MYLIP (445 aa).

The FERM domain occupies M1 to T279. Residues R341–C363 are disordered. Over residues P350–C363 the composition is skewed to low complexity. 3 residues coordinate Fe cation: C360, C363, and C368. The RING-type zinc finger occupies C387–R422. The segment at V431–L433 is critical for homodimerization.

As to quaternary structure, homodimer. Interacts with the E2 ubiquitin-conjugating enzyme, UBE2D1 (via RING-type zinc finger). Interacts with myosin regulatory light chain (MRLC) and TMEM4. In terms of processing, autoubiquitinated. Expressed in developing and adult brain, hippocampus, cerebellum, cerebral cortex, thalamus and substantia nigra. Predominantly found in neurons.

The protein localises to the cytoplasm. It is found in the cell membrane. The catalysed reaction is S-ubiquitinyl-[E2 ubiquitin-conjugating enzyme]-L-cysteine + [acceptor protein]-L-lysine = [E2 ubiquitin-conjugating enzyme]-L-cysteine + N(6)-ubiquitinyl-[acceptor protein]-L-lysine.. It functions in the pathway protein modification; protein ubiquitination. With respect to regulation, can bind 1 iron ion per dimer. Iron binding seems to decrease LDLR degradation activity. Its function is as follows. E3 ubiquitin-protein ligase that mediates ubiquitination and subsequent proteasomal degradation of myosin regulatory light chain (MRLC), LDLR, VLDLR and LRP8. Activity depends on E2 enzymes of the UBE2D family. Proteasomal degradation of MRLC leads to inhibit neurite outgrowth in presence of NGF by counteracting the stabilization of MRLC by saposin-like protein (CNPY2/MSAP) and reducing CNPY2-stimulated neurite outgrowth. Acts as a sterol-dependent inhibitor of cellular cholesterol uptake by mediating ubiquitination and subsequent degradation of LDLR. This Rattus norvegicus (Rat) protein is E3 ubiquitin-protein ligase MYLIP (Mylip).